The following is a 95-amino-acid chain: DNA-directed RNA polymerase subunit Rpo11 (95 aa).

It belongs to the archaeal Rpo11/eukaryotic RPB11/RPC19 RNA polymerase subunit family. Part of the RNA polymerase complex.

It is found in the cytoplasm. It catalyses the reaction RNA(n) + a ribonucleoside 5'-triphosphate = RNA(n+1) + diphosphate. Functionally, DNA-dependent RNA polymerase (RNAP) catalyzes the transcription of DNA into RNA using the four ribonucleoside triphosphates as substrates. The sequence is that of DNA-directed RNA polymerase subunit Rpo11 from Thermococcus onnurineus (strain NA1).